The sequence spans 767 residues: Integrin beta-8 (767 aa).

Positions 1–21 (MCGSALAFLTAALLSLHNCQR) are cleaved as a signal peptide. The Extracellular portion of the chain corresponds to 22-681 (GPALVLGAAW…SECLSGPSYL (660 aa)). The region spanning 46-95 (RCGSANVVSCARCLQLGPECGWCVQEDFVSGGSGSERCDTVSSLISKGCP) is the PSI domain. Intrachain disulfides connect cysteine 47-cysteine 65, cysteine 55-cysteine 469, cysteine 58-cysteine 83, cysteine 68-cysteine 94, cysteine 211-cysteine 218, cysteine 266-cysteine 307, cysteine 407-cysteine 419, cysteine 439-cysteine 467, cysteine 471-cysteine 490, cysteine 471-cysteine 493, cysteine 481-cysteine 493, cysteine 498-cysteine 527, cysteine 510-cysteine 525, cysteine 519-cysteine 530, cysteine 532-cysteine 545, cysteine 552-cysteine 566, cysteine 560-cysteine 571, cysteine 573-cysteine 582, cysteine 584-cysteine 608, cysteine 592-cysteine 606, cysteine 600-cysteine 611, cysteine 613-cysteine 623, cysteine 626-cysteine 629, cysteine 633-cysteine 660, and cysteine 639-cysteine 656. The 239-residue stretch at 146-384 (PVDLYYLVDV…NLVVEAYKKI (239 aa)) folds into the VWFA domain. Aspartate 154 and serine 156 together coordinate Mg(2+). Position 193 (aspartate 193) interacts with Ca(2+). A glycan (N-linked (GlcNAc...) asparagine) is linked at asparagine 233. Ca(2+) is bound by residues asparagine 249, aspartate 251, proline 253, and glutamate 254. Glutamate 254 serves as a coordination point for Mg(2+). N-linked (GlcNAc...) asparagine glycosylation is present at asparagine 402. N-linked (GlcNAc...) asparagine glycans are attached at residues asparagine 421, asparagine 431, and asparagine 456. I-EGF domains lie at 471 to 494 (CENH…PQCD), 498 to 546 (CHFD…QYCE), 547 to 583 (KDDF…DRCQ), and 584 to 624 (CPSA…RLCE). An N-linked (GlcNAc...) asparagine glycan is attached at asparagine 647. The helical transmembrane segment at 682–702 (RIFFIIFIVTFLIGLLKVLII) threads the bilayer. At 703 to 767 (RQVILQWNNN…NAQEAFRCNF (65 aa)) the chain is on the cytoplasmic side.

The protein belongs to the integrin beta chain family. As to quaternary structure, heterodimer of an alpha and a beta subunit. Beta-8 (ITGB8) associates with alpha-V (ITGAV) to form ITGAV:ITGB8. ITGAV:ITGB8 interacts with TGFB1.

Its subcellular location is the cell membrane. Its function is as follows. Integrin alpha-V:beta-8 (ITGAV:ITGB8) is a receptor for fibronectin. It recognizes the sequence R-G-D in its ligands. Integrin alpha-V:beta-6 (ITGAV:ITGB6) mediates R-G-D-dependent release of transforming growth factor beta-1 (TGF-beta-1) from regulatory Latency-associated peptide (LAP), thereby playing a key role in TGF-beta-1 activation on the surface of activated regulatory T-cells (Tregs). Required during vasculogenesis. This Mus musculus (Mouse) protein is Integrin beta-8.